The chain runs to 223 residues: Cytidylate kinase (223 aa).

Position 10 to 18 (10 to 18 (GPASSGKST)) interacts with ATP.

It belongs to the cytidylate kinase family. Type 1 subfamily.

Its subcellular location is the cytoplasm. It carries out the reaction CMP + ATP = CDP + ADP. It catalyses the reaction dCMP + ATP = dCDP + ADP. The sequence is that of Cytidylate kinase from Streptococcus pneumoniae (strain 70585).